We begin with the raw amino-acid sequence, 199 residues long: Peptidyl-tRNA hydrolase (199 aa).

Residue tyrosine 18 coordinates tRNA. Histidine 23 functions as the Proton acceptor in the catalytic mechanism. Residues tyrosine 72, asparagine 74, and asparagine 120 each coordinate tRNA.

The protein belongs to the PTH family. As to quaternary structure, monomer.

Its subcellular location is the cytoplasm. The enzyme catalyses an N-acyl-L-alpha-aminoacyl-tRNA + H2O = an N-acyl-L-amino acid + a tRNA + H(+). Hydrolyzes ribosome-free peptidyl-tRNAs (with 1 or more amino acids incorporated), which drop off the ribosome during protein synthesis, or as a result of ribosome stalling. Its function is as follows. Catalyzes the release of premature peptidyl moieties from peptidyl-tRNA molecules trapped in stalled 50S ribosomal subunits, and thus maintains levels of free tRNAs and 50S ribosomes. In Bifidobacterium longum (strain DJO10A), this protein is Peptidyl-tRNA hydrolase.